A 261-amino-acid polypeptide reads, in one-letter code: tRNA pseudouridine synthase A (261 aa).

Aspartate 51 acts as the Nucleophile in catalysis. Tyrosine 109 is a binding site for substrate.

It belongs to the tRNA pseudouridine synthase TruA family. As to quaternary structure, homodimer.

It catalyses the reaction uridine(38/39/40) in tRNA = pseudouridine(38/39/40) in tRNA. Formation of pseudouridine at positions 38, 39 and 40 in the anticodon stem and loop of transfer RNAs. This is tRNA pseudouridine synthase A from Shewanella loihica (strain ATCC BAA-1088 / PV-4).